The sequence spans 375 residues: Queuine tRNA-ribosyltransferase (375 aa).

The Proton acceptor role is filled by D89. Substrate-binding positions include 89 to 93, D143, Q185, and G212; that span reads DSGGF. An RNA binding region spans residues 243 to 249; the sequence is GVGKPED. D262 (nucleophile) is an active-site residue. Positions 267 to 271 are RNA binding; important for wobble base 34 recognition; that stretch reads TRNAR. C300, C302, C305, and H331 together coordinate Zn(2+).

This sequence belongs to the queuine tRNA-ribosyltransferase family. In terms of assembly, homodimer. Within each dimer, one monomer is responsible for RNA recognition and catalysis, while the other monomer binds to the replacement base PreQ1. Zn(2+) serves as cofactor.

It catalyses the reaction 7-aminomethyl-7-carbaguanine + guanosine(34) in tRNA = 7-aminomethyl-7-carbaguanosine(34) in tRNA + guanine. The protein operates within tRNA modification; tRNA-queuosine biosynthesis. Catalyzes the base-exchange of a guanine (G) residue with the queuine precursor 7-aminomethyl-7-deazaguanine (PreQ1) at position 34 (anticodon wobble position) in tRNAs with GU(N) anticodons (tRNA-Asp, -Asn, -His and -Tyr). Catalysis occurs through a double-displacement mechanism. The nucleophile active site attacks the C1' of nucleotide 34 to detach the guanine base from the RNA, forming a covalent enzyme-RNA intermediate. The proton acceptor active site deprotonates the incoming PreQ1, allowing a nucleophilic attack on the C1' of the ribose to form the product. After dissociation, two additional enzymatic reactions on the tRNA convert PreQ1 to queuine (Q), resulting in the hypermodified nucleoside queuosine (7-(((4,5-cis-dihydroxy-2-cyclopenten-1-yl)amino)methyl)-7-deazaguanosine). This is Queuine tRNA-ribosyltransferase from Pseudoalteromonas translucida (strain TAC 125).